Reading from the N-terminus, the 310-residue chain is Probable endonuclease 4 (310 aa).

Residues 1-31 (MNNQQSRGALGTSGATPDLPDATPGLSRNPV) are disordered. Residues His94, His134, Glu173, Asp207, His210, His244, Asp257, His259, and Glu289 each contribute to the Zn(2+) site.

This sequence belongs to the AP endonuclease 2 family. Requires Zn(2+) as cofactor.

The enzyme catalyses Endonucleolytic cleavage to 5'-phosphooligonucleotide end-products.. Functionally, endonuclease IV plays a role in DNA repair. It cleaves phosphodiester bonds at apurinic or apyrimidinic (AP) sites, generating a 3'-hydroxyl group and a 5'-terminal sugar phosphate. This is Probable endonuclease 4 from Streptomyces avermitilis (strain ATCC 31267 / DSM 46492 / JCM 5070 / NBRC 14893 / NCIMB 12804 / NRRL 8165 / MA-4680).